The primary structure comprises 136 residues: Purkinje cell protein 2 homolog (136 aa).

Disordered stretches follow at residues 1 to 64 (MMDQ…PEMD) and 86 to 136 (SSLP…TQAP). The region spanning 23–45 (QEGFFNLLSHVQGDRMEGQRCSL) is the GoLoco 1 domain. The span at 49-59 (PGQTTKSQSDP) shows a compositional bias: polar residues. One can recognise a GoLoco 2 domain in the interval 63 to 85 (MDSLMDMLASTQGRRMDDQRVTV). Residues 107 to 117 (LSPQPLLTPQD) show a composition bias toward polar residues. S127 bears the Phosphoserine mark.

May function as a cell-type specific modulator for G protein-mediated cell signaling. In Homo sapiens (Human), this protein is Purkinje cell protein 2 homolog (PCP2).